We begin with the raw amino-acid sequence, 350 residues long: Phospho-2-dehydro-3-deoxyheptonate aldolase, Phe-sensitive (350 aa).

N6-acetyllysine is present on lysine 244.

It belongs to the class-I DAHP synthase family. As to quaternary structure, homotetramer.

The catalysed reaction is D-erythrose 4-phosphate + phosphoenolpyruvate + H2O = 7-phospho-2-dehydro-3-deoxy-D-arabino-heptonate + phosphate. Its pathway is metabolic intermediate biosynthesis; chorismate biosynthesis; chorismate from D-erythrose 4-phosphate and phosphoenolpyruvate: step 1/7. Stereospecific condensation of phosphoenolpyruvate (PEP) and D-erythrose-4-phosphate (E4P) giving rise to 3-deoxy-D-arabino-heptulosonate-7-phosphate (DAHP). The protein is Phospho-2-dehydro-3-deoxyheptonate aldolase, Phe-sensitive (aroG) of Escherichia coli O157:H7.